An 84-amino-acid polypeptide reads, in one-letter code: MKVVLIVCLVWVMAMMELVSCECWSQADCSDGHCCAGSSFSKNCRPYGGDGEQCGPRNKYEVYSTGCPYEENLMCSVINRCQSA.

Positions 1 to 21 are cleaved as a signal peptide; it reads MKVVLIVCLVWVMAMMELVSC. 4 disulfides stabilise this stretch: Cys-23-Cys-35, Cys-29-Cys-44, Cys-34-Cys-67, and Cys-54-Cys-75.

This sequence belongs to the AVIT (prokineticin) family. Expressed by the venom gland.

The protein localises to the secreted. This Cyriopagopus hainanus (Chinese bird spider) protein is U8-theraphotoxin-Hhn1b.